Reading from the N-terminus, the 327-residue chain is Phenylalanine--tRNA ligase alpha subunit (327 aa).

Glu252 is a binding site for Mg(2+).

It belongs to the class-II aminoacyl-tRNA synthetase family. Phe-tRNA synthetase alpha subunit type 1 subfamily. As to quaternary structure, tetramer of two alpha and two beta subunits. Mg(2+) is required as a cofactor.

It is found in the cytoplasm. The catalysed reaction is tRNA(Phe) + L-phenylalanine + ATP = L-phenylalanyl-tRNA(Phe) + AMP + diphosphate + H(+). The polypeptide is Phenylalanine--tRNA ligase alpha subunit (Shewanella sediminis (strain HAW-EB3)).